The chain runs to 176 residues: MNRAAIAAGKPSGSISTGKPRRKTRAEVSEEMKHEIREAFDLFDADRSGRIDFHELKVAMRALGFDVKKEEIQRIMNEYDRDQLGEITFQDFEEVMIEKISNRDPTEEILKAFRLFDDDATGRISLKNLRRVAKELSENISDEELLAMIQEFDRDGDGEIDEEDFIAILRSTSAFS.

The tract at residues 1–27 (MNRAAIAAGKPSGSISTGKPRRKTRAE) is disordered. EF-hand domains follow at residues 31 to 66 (EMKH…LGFD), 67 to 102 (VKKE…KISN), 104 to 139 (DPTE…LSEN), and 140 to 175 (ISDE…TSAF). Residues Asp-44, Asp-46, Ser-48, Arg-50, and Glu-55 each contribute to the Ca(2+) site. Residues Asp-153, Asp-155, Asp-157, Glu-159, and Asp-164 each contribute to the Ca(2+) site.

This sequence belongs to the centrin family. Monomer.

Its subcellular location is the cytoplasm. It is found in the cytoskeleton. The protein resides in the microtubule organizing center. The protein localises to the centrosome. Plays a fundamental role in microtubule-organizing center structure and function. The protein is Caltractin (CAL) of Giardia intestinalis (Giardia lamblia).